The sequence spans 556 residues: Polypyrimidine tract-binding protein 1 (556 aa).

M1 carries the N-acetylmethionine modification. The residue at position 16 (S16) is a Phosphoserine. The interval 35 to 54 (ASAANGNDSKKFKGDNRSTG) is disordered. RRM domains are found at residues 58 to 142 (RVIH…SSPN), 183 to 259 (LRII…FSKL), and 362 to 436 (SVLL…LSKH). A Glycyl lysine isopeptide (Lys-Gly) (interchain with G-Cter in SUMO2) cross-link involves residue K64. Y126 is modified (phosphotyrosine). T137 is subject to Phosphothreonine. A Phosphoserine modification is found at S140. A Glycyl lysine isopeptide (Lys-Gly) (interchain with G-Cter in SUMO2) cross-link involves residue K217. Residues 436–458 (HQSVQLPREGQEDQGLTKDYGSS) form a disordered region. S458 carries the post-translational modification Phosphoserine. The 76-residue stretch at 479–554 (ATLHLSNIPP…HHLRVSFSKS (76 aa)) folds into the RRM 4 domain.

Monomer. Part of a ternary complex containing KHSRP, PTBP1, PTBP2 and HNRPH1. Interacts with RAVER1 and SFPQ.

It localises to the nucleus. Functionally, plays a role in pre-mRNA splicing and in the regulation of alternative splicing events. Activates exon skipping of its own pre-mRNA during muscle cell differentiation. Binds to the polypyrimidine tract of introns. May promote RNA looping when bound to two separate polypyrimidine tracts in the same pre-mRNA. May promote the binding of U2 snRNP to pre-mRNA. Cooperates with RAVER1 to modulate switching between mutually exclusive exons during maturation of the TPM1 pre-mRNA. Represses the splicing of MAPT/Tau exon 10. Binds to polypyrimidine-rich controlling element (PCE) of CFTR and promotes exon skipping of CFTR exon 9, thereby antagonizing TIA1 and its role in exon inclusion of CFTR exon 9. Plays a role in the splicing of pyruvate kinase PKM by binding repressively to a polypyrimidine tract flanking PKM exon 9, inhibiting exon 9 inclusion and resulting in exon 10 inclusion and production of the PKM M2 isoform. This Rattus norvegicus (Rat) protein is Polypyrimidine tract-binding protein 1 (Ptbp1).